Consider the following 465-residue polypeptide: Phosphatidylserine synthase 1 (465 aa).

Over 1 to 35 (MVSAMRSRTLSKDDVNYKMHFRMINEQQVEDITID) the chain is Cytoplasmic. Residues 36 to 56 (FFYKPHTITLLTFTTVSLMYF) form a helical membrane-spanning segment. Residues 57–68 (AFTRENTSQEDN) are Lumenal-facing. A helical membrane pass occupies residues 69–89 (IWKGILSVIFFFLIISVLAFP). Topologically, residues 90 to 102 (NGPFTRPHPAIWR) are cytoplasmic. The helical transmembrane segment at 103-123 (MVFGLSVLYFLFLVFLLFLNV) threads the bilayer. Residues 124–186 (EQVKAVMYWL…AMKALLIRSY (63 aa)) are Lumenal-facing. Residues 187-207 (GLCWTISITWEMTELFFMHLL) traverse the membrane as a helical segment. Over 208 to 216 (PNFAECWWD) the chain is Cytoplasmic. The chain crosses the membrane as a helical span at residues 217-237 (QVILDILLCNGGGILLGMVVC). Topologically, residues 238–286 (RFLEMRTYHWASFKDIHTTTGKIKRAVLQFTPASWIYVRWFDPKSSFQR) are lumenal. A helical transmembrane segment spans residues 287 to 307 (VAGVYLFMIIWQLTELNTFFL). Residues 308–319 (KHIFVFQASHPL) are Cytoplasmic-facing. A helical transmembrane segment spans residues 320–342 (SWCRILFIGIITAPTVRQYYAYL). Topologically, residues 343-355 (TDTQCKRVGTQCW) are lumenal. The chain crosses the membrane as a helical span at residues 356–376 (VFGAIAFLEATVCIKFGQDLF). Topologically, residues 377 to 383 (SKTHLLY) are cytoplasmic. The helical transmembrane segment at 384-404 (VFLWLFSVAVITFLCLYGMVW) threads the bilayer. Residues 405 to 465 (YADYCGQREK…GKVTNGVGKK (61 aa)) are Lumenal-facing. Residues 440 to 465 (PVKQNEGTSRRKNRHKGKVTNGVGKK) form a disordered region. Over residues 449–465 (RRKNRHKGKVTNGVGKK) the composition is skewed to basic residues.

The protein belongs to the phosphatidyl serine synthase family.

The protein localises to the endoplasmic reticulum membrane. The enzyme catalyses a 1,2-diacyl-sn-glycero-3-phosphoethanolamine + L-serine = a 1,2-diacyl-sn-glycero-3-phospho-L-serine + ethanolamine. It catalyses the reaction a 1,2-diacyl-sn-glycero-3-phosphocholine + L-serine = a 1,2-diacyl-sn-glycero-3-phospho-L-serine + choline. It participates in phospholipid metabolism; phosphatidylserine biosynthesis. In terms of biological role, catalyzes a base-exchange reaction in which the polar head group of phosphatidylethanolamine (PE) or phosphatidylcholine (PC) is replaced by L-serine. Catalyzes mainly the conversion of phosphatidylcholine but also converts, in vitro and to a lesser extent, phosphatidylethanolamine. This Xenopus tropicalis (Western clawed frog) protein is Phosphatidylserine synthase 1 (ptdss1).